Reading from the N-terminus, the 394-residue chain is Tryptophan synthase beta chain (394 aa).

An N6-(pyridoxal phosphate)lysine modification is found at K90.

This sequence belongs to the TrpB family. In terms of assembly, tetramer of two alpha and two beta chains. It depends on pyridoxal 5'-phosphate as a cofactor.

The enzyme catalyses (1S,2R)-1-C-(indol-3-yl)glycerol 3-phosphate + L-serine = D-glyceraldehyde 3-phosphate + L-tryptophan + H2O. Its pathway is amino-acid biosynthesis; L-tryptophan biosynthesis; L-tryptophan from chorismate: step 5/5. In terms of biological role, the beta subunit is responsible for the synthesis of L-tryptophan from indole and L-serine. The polypeptide is Tryptophan synthase beta chain (Bacteroides thetaiotaomicron (strain ATCC 29148 / DSM 2079 / JCM 5827 / CCUG 10774 / NCTC 10582 / VPI-5482 / E50)).